The primary structure comprises 200 residues: Peptidyl-tRNA hydrolase (200 aa).

A tRNA-binding site is contributed by Tyr-16. His-21 (proton acceptor) is an active-site residue. The tRNA site is built by Phe-67, Asn-69, and Asn-115.

It belongs to the PTH family. As to quaternary structure, monomer.

The protein resides in the cytoplasm. It carries out the reaction an N-acyl-L-alpha-aminoacyl-tRNA + H2O = an N-acyl-L-amino acid + a tRNA + H(+). Functionally, hydrolyzes ribosome-free peptidyl-tRNAs (with 1 or more amino acids incorporated), which drop off the ribosome during protein synthesis, or as a result of ribosome stalling. In terms of biological role, catalyzes the release of premature peptidyl moieties from peptidyl-tRNA molecules trapped in stalled 50S ribosomal subunits, and thus maintains levels of free tRNAs and 50S ribosomes. In Prochlorococcus marinus (strain AS9601), this protein is Peptidyl-tRNA hydrolase.